Consider the following 251-residue polypeptide: MGRGRVELKRIENKINRQVTFAKRRNGLLKKAYELSVLCDAEVALIIFSNRGKLYEFCSSSNMLKTLDRYQKCSYGSIEVNNKPAKELENSYREYLKLKGRYENLQRQQRNLLGEDLGPLNSKELEQLERQLDGSLKQVRSIKTQYMLDQLSDLQNKEQMLLETNRALAMKLDDMIGVRSHHMGGGGGWEGGEQNVTYAHHQAQSQGLYQPLECNPTLQMGYDNPVCSEQITATTQAQAQQGNGYIPGWML.

The MADS-box domain maps to Arg3–Phe57. Residues Ala85–Ile176 adopt a coiled-coil conformation. The K-box domain maps to Leu88–Val178.

As to quaternary structure, heterodimer with AGAMOUS capable of binding to CArG-box sequences. Interacts with AGL16. Interacts with TT16/AGL32. Expressed mainly in carpels, and weakly in stamens.

The protein resides in the nucleus. Its function is as follows. Probable transcription factor. Functions with SEPALLATA2/AGL4 and SEPALLATA3/AGL9 to ensure proper development of petals, stamens and carpels, and to prevent the indeterminate growth of the flower meristem. Forms a heterodimer via the K-box domain with AGAMOUS, that could be involved in genes regulation during floral meristem development. The chain is Developmental protein SEPALLATA 1 (SEP1) from Arabidopsis thaliana (Mouse-ear cress).